Here is a 196-residue protein sequence, read N- to C-terminus: uncharacterized protein (196 aa).

The protein belongs to the flavoredoxin family. FMN is required as a cofactor.

This is an uncharacterized protein from Aquifex aeolicus (strain VF5).